A 436-amino-acid polypeptide reads, in one-letter code: Serine hydroxymethyltransferase (436 aa).

(6S)-5,6,7,8-tetrahydrofolate contacts are provided by residues Leu120 and 124–126 (GHL). An N6-(pyridoxal phosphate)lysine modification is found at Lys229.

It belongs to the SHMT family. Homodimer. Pyridoxal 5'-phosphate serves as cofactor.

It is found in the cytoplasm. The enzyme catalyses (6R)-5,10-methylene-5,6,7,8-tetrahydrofolate + glycine + H2O = (6S)-5,6,7,8-tetrahydrofolate + L-serine. It participates in one-carbon metabolism; tetrahydrofolate interconversion. Its pathway is amino-acid biosynthesis; glycine biosynthesis; glycine from L-serine: step 1/1. In terms of biological role, catalyzes the reversible interconversion of serine and glycine with tetrahydrofolate (THF) serving as the one-carbon carrier. This reaction serves as the major source of one-carbon groups required for the biosynthesis of purines, thymidylate, methionine, and other important biomolecules. Also exhibits THF-independent aldolase activity toward beta-hydroxyamino acids, producing glycine and aldehydes, via a retro-aldol mechanism. This Roseiflexus castenholzii (strain DSM 13941 / HLO8) protein is Serine hydroxymethyltransferase.